The sequence spans 62 residues: Large ribosomal subunit protein bL28 (62 aa).

The protein belongs to the bacterial ribosomal protein bL28 family.

The sequence is that of Large ribosomal subunit protein bL28 from Thermobifida fusca (strain YX).